The sequence spans 324 residues: [Acyl-carrier-protein] phosphodiesterase PptH (324 aa).

3 residues coordinate Mn(2+): aspartate 22, histidine 24, and aspartate 51. Fe cation is bound by residues aspartate 51, asparagine 79, histidine 205, and histidine 246. Residue histidine 248 coordinates Mn(2+).

The protein belongs to the metallophosphoesterase superfamily. Requires Fe(3+) as cofactor. It depends on Mn(2+) as a cofactor.

The catalysed reaction is holo-[ACP] + H2O = apo-[ACP] + (R)-4'-phosphopantetheine + H(+). Functionally, catalyzes the hydrolysis of the phosphopantetheine group from substrate holo-carrier proteins. This chain is [Acyl-carrier-protein] phosphodiesterase PptH, found in Mycobacterium tuberculosis (strain ATCC 25618 / H37Rv).